Here is a 467-residue protein sequence, read N- to C-terminus: Dynactin subunit 4 (467 aa).

An N-acetylalanine modification is found at A2. Positions 152 to 172 (QQLAQKEKVERDRKKLARRRN) form a coiled coil. At S203 the chain carries Phosphoserine. K222 participates in a covalent cross-link: Glycyl lysine isopeptide (Lys-Gly) (interchain with G-Cter in SUMO2). T414 is subject to Phosphothreonine.

The protein belongs to the dynactin subunit 4 family. In terms of assembly, subunit of dynactin, a multiprotein complex part of a tripartite complex with dynein and a adapter, such as BICDL1, BICD2 or HOOK3. The dynactin complex is built around ACTR1A/ACTB filament and consists of an actin-related filament composed of a shoulder domain, a pointed end and a barbed end. Its length is defined by its flexible shoulder domain. The soulder is composed of 2 DCTN1 subunits, 4 DCTN2 and 2 DCTN3. The 4 DCNT2 (via N-terminus) bind the ACTR1A filament and act as molecular rulers to determine the length. The pointed end is important for binding dynein-dynactin cargo adapters. Consists of 4 subunits: ACTR10, DCNT4, DCTN5 and DCTN6. The barbed end is composed of a CAPZA1:CAPZB heterodimers, which binds ACTR1A/ACTB filament and dynactin and stabilizes dynactin. Interacts with ATP7B, but not ATP7A, in a copper-dependent manner. Interacts with ANK2; this interaction is required for localization at costameres. Interacts with N4BP2L1.

The protein resides in the cytoplasm. The protein localises to the cytoskeleton. Its subcellular location is the microtubule organizing center. It localises to the centrosome. It is found in the stress fiber. The protein resides in the cell cortex. The protein localises to the myofibril. Its subcellular location is the sarcomere. In terms of biological role, part of the dynactin complex that activates the molecular motor dynein for ultra-processive transport along microtubules. This Mus musculus (Mouse) protein is Dynactin subunit 4 (Dctn4).